The chain runs to 151 residues: MQDSSIKLGIVVAEFNYDITHLMLDRAISHAKFLNAEVRAVFKVPGTFEIPLAVKQLLSRDDIDCVVTLGAVIKGETKHDEVIANQVARLVSDLSLEFNKPVSLGIIGPGATHEQAMERIEEYSTRAVESAVKMARRMRSMMEGSSSVNIE.

5-amino-6-(D-ribitylamino)uracil is bound by residues Phe-15, 47–49, and 71–73; these read TFE and AVI. 76–77 contributes to the (2S)-2-hydroxy-3-oxobutyl phosphate binding site; that stretch reads ET. The active-site Proton donor is His-79. Residue Leu-104 participates in 5-amino-6-(D-ribitylamino)uracil binding. Arg-119 provides a ligand contact to (2S)-2-hydroxy-3-oxobutyl phosphate.

Belongs to the DMRL synthase family.

It carries out the reaction (2S)-2-hydroxy-3-oxobutyl phosphate + 5-amino-6-(D-ribitylamino)uracil = 6,7-dimethyl-8-(1-D-ribityl)lumazine + phosphate + 2 H2O + H(+). It participates in cofactor biosynthesis; riboflavin biosynthesis; riboflavin from 2-hydroxy-3-oxobutyl phosphate and 5-amino-6-(D-ribitylamino)uracil: step 1/2. Its function is as follows. Catalyzes the formation of 6,7-dimethyl-8-ribityllumazine by condensation of 5-amino-6-(D-ribitylamino)uracil with 3,4-dihydroxy-2-butanone 4-phosphate. This is the penultimate step in the biosynthesis of riboflavin. This is 6,7-dimethyl-8-ribityllumazine synthase from Metallosphaera sedula (strain ATCC 51363 / DSM 5348 / JCM 9185 / NBRC 15509 / TH2).